Reading from the N-terminus, the 266-residue chain is tRNA (guanine-N(7)-)-methyltransferase (266 aa).

The segment at 1–32 is disordered; the sequence is MSDHGRMHIPESGLATPAAAHSDDPPHPHFNR. Glu-96, Glu-121, Asp-148, and Asp-171 together coordinate S-adenosyl-L-methionine. Asp-171 is a catalytic residue. Residues Lys-175 and Asp-207 each coordinate substrate.

Belongs to the class I-like SAM-binding methyltransferase superfamily. TrmB family.

The catalysed reaction is guanosine(46) in tRNA + S-adenosyl-L-methionine = N(7)-methylguanosine(46) in tRNA + S-adenosyl-L-homocysteine. It functions in the pathway tRNA modification; N(7)-methylguanine-tRNA biosynthesis. Functionally, catalyzes the formation of N(7)-methylguanine at position 46 (m7G46) in tRNA. In Mycolicibacterium vanbaalenii (strain DSM 7251 / JCM 13017 / BCRC 16820 / KCTC 9966 / NRRL B-24157 / PYR-1) (Mycobacterium vanbaalenii), this protein is tRNA (guanine-N(7)-)-methyltransferase.